Reading from the N-terminus, the 295-residue chain is Epidermal growth factor-like protein 8 (295 aa).

Residues 1-25 (MGSRAELHTLLGGLSFLLLLMSGQG) form the signal peptide. In terms of domain architecture, EMI spans 34 to 112 (SQGVCSRQTL…RHPGALTCDE (79 aa)). Disulfide bonds link cysteine 38–cysteine 97, cysteine 65–cysteine 71, cysteine 96–cysteine 110, cysteine 115–cysteine 125, cysteine 119–cysteine 131, cysteine 133–cysteine 142, cysteine 149–cysteine 160, cysteine 156–cysteine 169, and cysteine 171–cysteine 184. N-linked (GlcNAc...) asparagine glycosylation occurs at asparagine 50. The region spanning 111–143 (DEAICAKPCQNGGVCVRPDQCECAPGWGGRHCH) is the EGF-like 1 domain. Positions 145–185 (DVDECRTGVTLCSHRCHNTAGSFTCGCPHGLVLGPDGRTCA) constitute an EGF-like 2; calcium-binding domain. Residues 202 to 233 (VREAGREDRALRREIRELRGRLERLEQWAGQA) are a coiled coil.

The protein localises to the secreted. This chain is Epidermal growth factor-like protein 8 (EGFL8), found in Sus scrofa (Pig).